The primary structure comprises 248 residues: Protein GrpE (248 aa).

The segment at 229 to 248 is disordered; it reads AAPKEDTLPAQENQSSPADS. Positions 238–248 are enriched in polar residues; that stretch reads AQENQSSPADS.

It belongs to the GrpE family. In terms of assembly, homodimer.

It is found in the cytoplasm. Its function is as follows. Participates actively in the response to hyperosmotic and heat shock by preventing the aggregation of stress-denatured proteins, in association with DnaK and GrpE. It is the nucleotide exchange factor for DnaK and may function as a thermosensor. Unfolded proteins bind initially to DnaJ; upon interaction with the DnaJ-bound protein, DnaK hydrolyzes its bound ATP, resulting in the formation of a stable complex. GrpE releases ADP from DnaK; ATP binding to DnaK triggers the release of the substrate protein, thus completing the reaction cycle. Several rounds of ATP-dependent interactions between DnaJ, DnaK and GrpE are required for fully efficient folding. This Trichormus variabilis (strain ATCC 29413 / PCC 7937) (Anabaena variabilis) protein is Protein GrpE.